The chain runs to 578 residues: Glucans biosynthesis protein G (578 aa).

The first 37 residues, 1–37 (MIVSPCIAPRIPGTRLRKAMLAGVALVGLLSAGQLWA), serve as a signal peptide directing secretion. Positions 511–578 (VPVEAPKPAK…TWSYQLPADE (68 aa)) are disordered. Positions 517–543 (KPAKDSKQDKAAAKHAHAKAEKAKAEQ) are enriched in basic and acidic residues. Low complexity predominate over residues 544–554 (PAEQPAADAAS).

The protein belongs to the OpgD/OpgG family.

The protein localises to the periplasm. The protein operates within glycan metabolism; osmoregulated periplasmic glucan (OPG) biosynthesis. Functionally, involved in the biosynthesis of osmoregulated periplasmic glucans (OPGs). The sequence is that of Glucans biosynthesis protein G from Pseudomonas entomophila (strain L48).